We begin with the raw amino-acid sequence, 344 residues long: Phosphate acyltransferase (344 aa).

It belongs to the PlsX family. As to quaternary structure, homodimer. Probably interacts with PlsY.

It is found in the cytoplasm. The catalysed reaction is a fatty acyl-[ACP] + phosphate = an acyl phosphate + holo-[ACP]. It functions in the pathway lipid metabolism; phospholipid metabolism. Catalyzes the reversible formation of acyl-phosphate (acyl-PO(4)) from acyl-[acyl-carrier-protein] (acyl-ACP). This enzyme utilizes acyl-ACP as fatty acyl donor, but not acyl-CoA. The sequence is that of Phosphate acyltransferase from Acaryochloris marina (strain MBIC 11017).